Reading from the N-terminus, the 65-residue chain is Orally active insecticidal peptide-3 (65 aa).

Residues 1–21 form the signal peptide; that stretch reads MKTSVLFAILGLALLFCLSFG. The propeptide occupies 22-29; the sequence is VELEETGR. 3 cysteine pairs are disulfide-bonded: cysteine 31/cysteine 46, cysteine 38/cysteine 51, and cysteine 45/cysteine 58. Position 62 is a proline amide (proline 62).

It belongs to the neurotoxin 10 (Hwtx-1) family. 46 (Jztx-7/10/12) subfamily. As to expression, expressed by the venom gland.

It localises to the secreted. In terms of biological role, probable ion channel inhibitor. Shows insecticidal activity when injected into mealworms. This Selenotypus plumipes (Australian featherleg tarantula) protein is Orally active insecticidal peptide-3.